The sequence spans 306 residues: Porphobilinogen deaminase (306 aa).

S-(dipyrrolylmethanemethyl)cysteine is present on Cys240.

Belongs to the HMBS family. In terms of assembly, monomer. Dipyrromethane serves as cofactor.

It carries out the reaction 4 porphobilinogen + H2O = hydroxymethylbilane + 4 NH4(+). It participates in porphyrin-containing compound metabolism; protoporphyrin-IX biosynthesis; coproporphyrinogen-III from 5-aminolevulinate: step 2/4. Functionally, tetrapolymerization of the monopyrrole PBG into the hydroxymethylbilane pre-uroporphyrinogen in several discrete steps. In Syntrophomonas wolfei subsp. wolfei (strain DSM 2245B / Goettingen), this protein is Porphobilinogen deaminase.